The primary structure comprises 204 residues: Large ribosomal subunit protein eL15y (204 aa).

Residues 162-204 form a disordered region; that stretch reads RGLTSEGKKNRGLRGKGHNNHKNRPSRRATWKKNNSISLRRYR. Residues 171–192 show a composition bias toward basic residues; sequence NRGLRGKGHNNHKNRPSRRATW. Polar residues predominate over residues 193–204; that stretch reads KKNNSISLRRYR.

It belongs to the eukaryotic ribosomal protein eL15 family.

The polypeptide is Large ribosomal subunit protein eL15y (RPL15B) (Arabidopsis thaliana (Mouse-ear cress)).